Consider the following 289-residue polypeptide: Ribosomal RNA small subunit methyltransferase A (289 aa).

Residues Asn33, Val35, Gly60, Glu81, Asp111, and Asn130 each contribute to the S-adenosyl-L-methionine site.

It belongs to the class I-like SAM-binding methyltransferase superfamily. rRNA adenine N(6)-methyltransferase family. RsmA subfamily.

Its subcellular location is the cytoplasm. It catalyses the reaction adenosine(1518)/adenosine(1519) in 16S rRNA + 4 S-adenosyl-L-methionine = N(6)-dimethyladenosine(1518)/N(6)-dimethyladenosine(1519) in 16S rRNA + 4 S-adenosyl-L-homocysteine + 4 H(+). Its function is as follows. Specifically dimethylates two adjacent adenosines (A1518 and A1519) in the loop of a conserved hairpin near the 3'-end of 16S rRNA in the 30S particle. May play a critical role in biogenesis of 30S subunits. This Corynebacterium efficiens (strain DSM 44549 / YS-314 / AJ 12310 / JCM 11189 / NBRC 100395) protein is Ribosomal RNA small subunit methyltransferase A.